The sequence spans 250 residues: 5-oxoprolinase subunit A (250 aa).

It belongs to the LamB/PxpA family. As to quaternary structure, forms a complex composed of PxpA, PxpB and PxpC.

The enzyme catalyses 5-oxo-L-proline + ATP + 2 H2O = L-glutamate + ADP + phosphate + H(+). In terms of biological role, catalyzes the cleavage of 5-oxoproline to form L-glutamate coupled to the hydrolysis of ATP to ADP and inorganic phosphate. The chain is 5-oxoprolinase subunit A from Pseudomonas fluorescens (strain Pf0-1).